A 233-amino-acid polypeptide reads, in one-letter code: 7-cyano-7-deazaguanine synthase (233 aa).

An ATP-binding site is contributed by L8–M18. The Zn(2+) site is built by C186, C194, C197, and C200.

It belongs to the QueC family. Homodimer. Requires Zn(2+) as cofactor.

It catalyses the reaction 7-carboxy-7-deazaguanine + NH4(+) + ATP = 7-cyano-7-deazaguanine + ADP + phosphate + H2O + H(+). Its pathway is purine metabolism; 7-cyano-7-deazaguanine biosynthesis. Its function is as follows. Catalyzes the ATP-dependent conversion of 7-carboxy-7-deazaguanine (CDG) to 7-cyano-7-deazaguanine (preQ(0)). This Desulfitobacterium hafniense (strain DSM 10664 / DCB-2) protein is 7-cyano-7-deazaguanine synthase.